We begin with the raw amino-acid sequence, 158 residues long: C-type lectin BML-2 (158 aa).

Residues 1 to 23 (MGHFTFTGLCLLAMFLSLRGAEC) form the signal peptide. 4 cysteine pairs are disulfide-bonded: Cys26–Cys37, Cys54–Cys154, Cys61–Cys156, and Cys129–Cys146. The C-type lectin domain maps to 33–155 (KNGLCYKVFS…CESLHPFLCQ (123 aa)). Positions 119-121 (EPN) match the Mannose-binding motif. Residue Asn121 is glycosylated (N-linked (GlcNAc...) asparagine). Glu127, Asn142, and Asp143 together coordinate Ca(2+).

Belongs to the true venom lectin family. Dimer. Probably non-covalently linked. As to expression, expressed by the venom gland.

It localises to the secreted. Recombinant C-type lectin BML-2 is able to agglutinate erythrocytes. May be a calcium-dependent lectin. In Bungarus multicinctus (Many-banded krait), this protein is C-type lectin BML-2.